A 193-amino-acid chain; its full sequence is Bcl-2-binding component 3 (193 aa).

Disordered stretches follow at residues 1–31 (MARA…GRLM) and 71–131 (ALGG…VEEE). Ser-10 is subject to Phosphoserine. The BH3 signature appears at 137-151 (IGAQLRRMADDLNAQ).

Belongs to the Bcl-2 family. As to quaternary structure, interacts with MCL1 and BCL2A1. Interacts with BCL2 and BCL2L1/BCL-XL. Interacts (via BH3 domain) with NOL3 (via CARD domain); this interaction prevents BBC3 association with BCL2 and results in CASP8 activation.

It is found in the mitochondrion. Functionally, essential mediator of p53/TP53-dependent and p53/TP53-independent apoptosis. Promotes partial unfolding of BCL2L1 and dissociation of BCL2L1 from p53/TP53, releasing the bound p53/TP53 to induce apoptosis. Regulates ER stress-induced neuronal apoptosis. The protein is Bcl-2-binding component 3 (Bbc3) of Mus musculus (Mouse).